A 797-amino-acid polypeptide reads, in one-letter code: Protocadherin beta-9 (797 aa).

The signal sequence occupies residues Met-1–Ala-26. Residues Gly-27–Leu-690 are Extracellular-facing. Cadherin domains are found at residues Val-35–Phe-133, Met-138–Phe-242, Tyr-247–Leu-347, Leu-352–Phe-451, and Tyr-456–Val-561. An N-linked (GlcNAc...) asparagine glycan is attached at Asn-169. An N-linked (GlcNAc...) asparagine glycan is attached at Asn-418. An N-linked (GlcNAc...) asparagine glycan is attached at Asn-567. The region spanning Gly-568–Leu-671 is the Cadherin 6 domain. A helical membrane pass occupies residues Val-691–Val-711. Over Arg-712–Tyr-797 the chain is Cytoplasmic. The disordered stretch occupies residues His-777–Tyr-797. The span at Asn-786–Tyr-797 shows a compositional bias: polar residues.

It localises to the cell membrane. Functionally, potential calcium-dependent cell-adhesion protein. May be involved in the establishment and maintenance of specific neuronal connections in the brain. This Homo sapiens (Human) protein is Protocadherin beta-9 (PCDHB9).